A 255-amino-acid chain; its full sequence is MNLLEEKIRAANAAGRPALIPFLTAGFPDRATFWPTLMELDENGADIIEIGVPFSDPVADGPVVEEASRRALSDGVNLRGILAELAQRKGLVKAGLVLMGYLNPFLQYGYEKLAQDAARGGVHGFIVPDLPHEESGPLHRALKKEGIALIPLVGPNTSAERMALYAEEGEGYVYVVSVMGITGERGDVAPQVADTMRRARSVFSLPLALGFGLREPGQLRELPPDARPDAAVFGSALLNHLEEGHSAEEFMARWK.

Catalysis depends on proton acceptor residues E49 and D60.

The protein belongs to the TrpA family. As to quaternary structure, tetramer of two alpha and two beta chains.

It carries out the reaction (1S,2R)-1-C-(indol-3-yl)glycerol 3-phosphate + L-serine = D-glyceraldehyde 3-phosphate + L-tryptophan + H2O. It functions in the pathway amino-acid biosynthesis; L-tryptophan biosynthesis; L-tryptophan from chorismate: step 5/5. Its function is as follows. The alpha subunit is responsible for the aldol cleavage of indoleglycerol phosphate to indole and glyceraldehyde 3-phosphate. The protein is Tryptophan synthase alpha chain of Desulfovibrio desulfuricans (strain ATCC 27774 / DSM 6949 / MB).